Consider the following 93-residue polypeptide: Co-chaperonin GroES (93 aa).

It belongs to the GroES chaperonin family. Heptamer of 7 subunits arranged in a ring. Interacts with the chaperonin GroEL.

It is found in the cytoplasm. In terms of biological role, together with the chaperonin GroEL, plays an essential role in assisting protein folding. The GroEL-GroES system forms a nano-cage that allows encapsulation of the non-native substrate proteins and provides a physical environment optimized to promote and accelerate protein folding. GroES binds to the apical surface of the GroEL ring, thereby capping the opening of the GroEL channel. This Geobacillus kaustophilus (strain HTA426) protein is Co-chaperonin GroES.